A 445-amino-acid chain; its full sequence is C-type lectin domain family 4 member M (445 aa).

Residues 1–49 (MSDSKEPRVQQLGLLEEDPTTSGIRLFPRDFQFQQIHGHKSSTGCLGHG) lie on the Cytoplasmic side of the membrane. Positions 14-15 (LL) match the Endocytosis signal motif. Residues 50 to 70 (PLVLQLLSFTLLAGVLVAILV) form a helical; Signal-anchor for type II membrane protein membrane-spanning segment. Residues 71–445 (QVSKVPSSLS…KKPAVCFRDE (375 aa)) lie on the Extracellular side of the membrane. Residue asparagine 92 is glycosylated (N-linked (GlcNAc...) asparagine). 9 repeat units span residues 108-130 (KLQE…PEKS), 131-151 (KLQE…ELPE), 154-176 (KLQE…PEKS), 177-199 (KLQE…PEKS), 200-222 (KLQE…PEKS), 223-245 (KLQE…PEKS), 246-268 (KLQE…PEKS), 269-291 (ELQE…PDQS), and 292-314 (KQQQ…CRHC). Residues 108-315 (KLQEIYQELT…AFERLCRHCP (208 aa)) form a 9 X approximate tandem repeats region. 4 disulfide bridges follow: cysteine 311–cysteine 441, cysteine 314–cysteine 325, cysteine 342–cysteine 435, and cysteine 414–cysteine 427. A C-type lectin domain is found at 320–436 (FFQGNCYFMS…CDIDNYWICK (117 aa)). Positions 405, 407, 409, 412, 423, and 424 each coordinate Ca(2+). Asparagine 407 carries N-linked (GlcNAc...) asparagine glycosylation.

In terms of assembly, homotetramer.

It is found in the membrane. In terms of biological role, probable pathogen-recognition receptor involved in peripheral immune surveillance in liver. May mediate the endocytosis of pathogens which are subsequently degraded in lysosomal compartments. Probably recognizes in a calcium-dependent manner high mannose N-linked oligosaccharides in a variety of pathogen antigens. Is a receptor for ICAM3, probably by binding to mannose-like carbohydrates. The sequence is that of C-type lectin domain family 4 member M (CLEC4M) from Pan troglodytes (Chimpanzee).